A 117-amino-acid polypeptide reads, in one-letter code: Large ribosomal subunit protein bL17 (117 aa).

It belongs to the bacterial ribosomal protein bL17 family. In terms of assembly, part of the 50S ribosomal subunit. Contacts protein L32.

This chain is Large ribosomal subunit protein bL17, found in Endomicrobium trichonymphae.